Reading from the N-terminus, the 780-residue chain is Protein SAV (780 aa).

Residues 253–260 (GPPGTGKT) and 528–535 (GPPGTGKT) contribute to the ATP site.

This sequence belongs to the AAA ATPase family. CDC48 subfamily.

In terms of biological role, not yet known, shows ATPase activity. The protein is Protein SAV (sav) of Sulfolobus acidocaldarius (strain ATCC 33909 / DSM 639 / JCM 8929 / NBRC 15157 / NCIMB 11770).